The following is a 330-amino-acid chain: MAASVSHPALSSFHKISCNITGISGLISFSRRISVSSVLPTSAVAAKRDAAGKGVRGQMKPRRQAGEPRTERMAVDQDWTAVYPTAASFKPSAVPLPVRMGYPVNRGVPPAKHGNLELIKIPNFLHLTPATIKKHCEALKPFLTEWPSALDSDEKCTEHFPIQVQSKDFVSSGLSLRNPDARIVTLKVKHSSLNLDDHARKKMIKLAEKRYCKETDTLTITTDSCPLRQQNYDYAMYLLTVLYHESWKSEAWEQEKTRADMEEYEWQDSPSQRNILETLKSIRGTEETHELLDQPEVGEYRNSVTQMKNHGETEENLLRYKEAVKKLLQL.

A disordered region spans residues 50–73; the sequence is AAGKGVRGQMKPRRQAGEPRTERM. Over residues 64–73 the composition is skewed to basic and acidic residues; it reads QAGEPRTERM.

It belongs to the mitochondrion-specific ribosomal protein mS35 family. Component of the mitochondrial ribosome small subunit (28S) which comprises a 12S rRNA and about 30 distinct proteins.

The protein localises to the mitochondrion. This Danio rerio (Zebrafish) protein is Small ribosomal subunit protein mS35 (mrps35).